The following is a 78-amino-acid chain: Small ribosomal subunit protein bS20 (78 aa).

Belongs to the bacterial ribosomal protein bS20 family.

Its function is as follows. Binds directly to 16S ribosomal RNA. This Streptococcus thermophilus (strain ATCC BAA-491 / LMD-9) protein is Small ribosomal subunit protein bS20.